The following is a 549-amino-acid chain: Cation/acetate symporter ActP (549 aa).

The Periplasmic segment spans residues 1–32 (MKRVLTALAATLPFAANAADAISGAVERQPTN). A helical transmembrane segment spans residues 33-55 (WQAIIMFLIFVVFTLGITYWASK). The Cytoplasmic portion of the chain corresponds to 56–75 (RVRSRNDYYTAGGNITGFQN). A helical membrane pass occupies residues 76–98 (GLAIAGDYMSAASFLGISALVFT). The Periplasmic portion of the chain corresponds to 99 to 102 (SGYD). A helical transmembrane segment spans residues 103-125 (GLIYSLGFLVGWPIILFLIAERL). Over 126 to 145 (RNLGRYTFADVASYRLKQGP) the chain is Cytoplasmic. Residues 146 to 168 (IRILSACGSLVVVALYLIAQMVG) traverse the membrane as a helical segment. Residues 169 to 182 (AGKLIELLFGLNYH) are Periplasmic-facing. The chain crosses the membrane as a helical span at residues 183-205 (IAVVLVGVLMMMYVLFGGMLATT). The Cytoplasmic portion of the chain corresponds to 206 to 211 (WVQIIK). A helical transmembrane segment spans residues 212–234 (AVLLLFGASFMAFMVMKHVGFSF). The Periplasmic segment spans residues 235 to 263 (NNLFSEAMAVHPKGVDIMKPGGLVKDPIS). Residues 264–286 (ALSLGLGLMFGTAGLPHILMHFF) traverse the membrane as a helical segment. At 287–297 (TVSDAREARKS) the chain is on the cytoplasmic side. A helical membrane pass occupies residues 298–320 (VFYATGFMGYFYILTFIIGFGAI). Topologically, residues 321–358 (MLVGANPEYKDAAGHLIGGNNMAAVHLANAVGGNLFLG) are periplasmic. Residues 359 to 381 (FISAVAFATILAVVAGLTLAGAS) traverse the membrane as a helical segment. Residues 382–401 (AVSHDLYANVFKKGATEREE) are Cytoplasmic-facing. A helical membrane pass occupies residues 402–424 (LRVSKITVLILGVIAIILGVLFE). Residues 425–427 (NQN) lie on the Periplasmic side of the membrane. Residues 428–450 (IAFMVGLAFAIAASCNFPIILLS) traverse the membrane as a helical segment. The Cytoplasmic portion of the chain corresponds to 451 to 461 (MYWSKLTTRGA). Residues 462 to 484 (MLGGWLGLITAVVLMILGPTIWV) form a helical membrane-spanning segment. Residues 485–493 (QILGHEKAI) lie on the Periplasmic side of the membrane. Residues 494 to 516 (FPYEYPALFSISVAFLGIWLFSA) traverse the membrane as a helical segment. Residues 517-549 (TDNSAEGARERELFRAQFIRSQTGFGVEQGRAH) lie on the Cytoplasmic side of the membrane.

The protein belongs to the sodium:solute symporter (SSF) (TC 2.A.21) family.

It is found in the cell inner membrane. In terms of biological role, transports acetate. This Escherichia coli O6:H1 (strain CFT073 / ATCC 700928 / UPEC) protein is Cation/acetate symporter ActP (actP).